Consider the following 535-residue polypeptide: Light-independent protochlorophyllide reductase subunit B (535 aa).

D36 is a [4Fe-4S] cluster binding site. D287 acts as the Proton donor in catalysis. 422-423 (GL) contacts substrate.

The protein belongs to the ChlB/BchB/BchZ family. In terms of assembly, protochlorophyllide reductase is composed of three subunits; BchL, BchN and BchB. Forms a heterotetramer of two BchB and two BchN subunits. It depends on [4Fe-4S] cluster as a cofactor.

The catalysed reaction is chlorophyllide a + oxidized 2[4Fe-4S]-[ferredoxin] + 2 ADP + 2 phosphate = protochlorophyllide a + reduced 2[4Fe-4S]-[ferredoxin] + 2 ATP + 2 H2O. The protein operates within porphyrin-containing compound metabolism; bacteriochlorophyll biosynthesis (light-independent). Functionally, component of the dark-operative protochlorophyllide reductase (DPOR) that uses Mg-ATP and reduced ferredoxin to reduce ring D of protochlorophyllide (Pchlide) to form chlorophyllide a (Chlide). This reaction is light-independent. The NB-protein (BchN-BchB) is the catalytic component of the complex. The polypeptide is Light-independent protochlorophyllide reductase subunit B (Rhodopseudomonas palustris (strain BisB5)).